The following is a 385-amino-acid chain: Meiotic recombination protein SPO11-2 (385 aa).

In terms of domain architecture, Topo IIA-type catalytic spans 24–169 (LPPAEVRARI…LGIMASSRGA (146 aa)). Residue Tyr-126 is the O-(5'-phospho-DNA)-tyrosine intermediate of the active site. 2 residues coordinate Mg(2+): Glu-219 and Asp-272.

This sequence belongs to the TOP6A family. In terms of assembly, interacts with TOP6B. It depends on Mg(2+) as a cofactor.

It localises to the nucleus. It carries out the reaction ATP-dependent breakage, passage and rejoining of double-stranded DNA.. Required for meiotic recombination. Mediates DNA cleavage that forms the double-strand breaks (DSB) that initiate meiotic recombination. This Oryza sativa subsp. japonica (Rice) protein is Meiotic recombination protein SPO11-2 (SPO11-2).